The chain runs to 185 residues: Putative manganese efflux pump MntP (185 aa).

6 helical membrane-spanning segments follow: residues 4–24 (LTSS…ALAI), 36–56 (ALVI…AGWI), 65–85 (ISSY…IKMI), 105–125 (VILL…SFGV), 130–150 (VLMP…AGVF), and 165–185 (IFGG…ILPL).

The protein belongs to the MntP (TC 9.B.29) family.

Its subcellular location is the cell membrane. In terms of biological role, probably functions as a manganese efflux pump. This is Putative manganese efflux pump MntP from Methanoregula boonei (strain DSM 21154 / JCM 14090 / 6A8).